A 170-amino-acid chain; its full sequence is Flavodoxin (170 aa).

Positions 5–165 constitute a Flavodoxin-like domain; that stretch reads IGLFYGTQTG…RIKSWVAQLK (161 aa).

The protein belongs to the flavodoxin family. It depends on FMN as a cofactor.

In terms of biological role, low-potential electron donor to a number of redox enzymes. The protein is Flavodoxin (isiB) of Nostoc sp. (strain PCC 7120 / SAG 25.82 / UTEX 2576).